The following is a 523-amino-acid chain: 26S proteasome regulatory subunit RPN3 (523 aa).

Position 2 is an N-acetylalanine (Ala2). A PCI domain is found at 270 to 450 (ARYFFYLSKI…GFIETTELLN (181 aa)). Ser454 is subject to Phosphoserine. The span at 480 to 495 (RYPEDKKTQQNEKSEN) shows a compositional bias: basic and acidic residues. A disordered region spans residues 480–523 (RYPEDKKTQQNEKSENGENDDDTLDGDLMDDMSDISDLDDLGFL). Residues 496–523 (GENDDDTLDGDLMDDMSDISDLDDLGFL) show a composition bias toward acidic residues.

Belongs to the proteasome subunit S3 family. As to quaternary structure, the 26S proteasome is composed of a core protease, known as the 20S proteasome, capped at one or both ends by the 19S regulatory complex (RC). The RC is composed of at least 18 different subunits in two subcomplexes, the base and the lid, which form the portions proximal and distal to the 20S proteolytic core, respectively. Post-translationally, N-acetylated by NAT1.

Acts as a regulatory subunit of the 26S proteasome which is involved in the ATP-dependent degradation of ubiquitinated proteins. The polypeptide is 26S proteasome regulatory subunit RPN3 (RPN3) (Saccharomyces cerevisiae (strain ATCC 204508 / S288c) (Baker's yeast)).